We begin with the raw amino-acid sequence, 285 residues long: Bifunctional protein FolD (285 aa).

Residues 165-167 (GAS) and serine 190 contribute to the NADP(+) site.

It belongs to the tetrahydrofolate dehydrogenase/cyclohydrolase family. In terms of assembly, homodimer.

It catalyses the reaction (6R)-5,10-methylene-5,6,7,8-tetrahydrofolate + NADP(+) = (6R)-5,10-methenyltetrahydrofolate + NADPH. The enzyme catalyses (6R)-5,10-methenyltetrahydrofolate + H2O = (6R)-10-formyltetrahydrofolate + H(+). It functions in the pathway one-carbon metabolism; tetrahydrofolate interconversion. In terms of biological role, catalyzes the oxidation of 5,10-methylenetetrahydrofolate to 5,10-methenyltetrahydrofolate and then the hydrolysis of 5,10-methenyltetrahydrofolate to 10-formyltetrahydrofolate. The protein is Bifunctional protein FolD of Cupriavidus metallidurans (strain ATCC 43123 / DSM 2839 / NBRC 102507 / CH34) (Ralstonia metallidurans).